The sequence spans 469 residues: Signal recognition particle 54 kDa protein (469 aa).

Residues 104–111, 184–188, and 242–245 each bind GTP; these read GLYGSGKT, DTAGR, and TKLD. Disordered stretches follow at residues 388–410 and 447–469; these read ELEN…SGKP and QQGG…PFGD. Over residues 448-469 the composition is skewed to gly residues; the sequence is QGGGGGGGMGGMGGGGMGPFGD.

The protein belongs to the GTP-binding SRP family. SRP54 subfamily. Part of the signal recognition particle protein translocation system, which is composed of SRP and FtsY. Archaeal SRP consists of a 7S RNA molecule of 300 nucleotides and two protein subunits: SRP54 and SRP19.

It localises to the cytoplasm. The enzyme catalyses GTP + H2O = GDP + phosphate + H(+). Functionally, involved in targeting and insertion of nascent membrane proteins into the cytoplasmic membrane. Binds to the hydrophobic signal sequence of the ribosome-nascent chain (RNC) as it emerges from the ribosomes. The SRP-RNC complex is then targeted to the cytoplasmic membrane where it interacts with the SRP receptor FtsY. This is Signal recognition particle 54 kDa protein from Haloarcula marismortui (strain ATCC 43049 / DSM 3752 / JCM 8966 / VKM B-1809) (Halobacterium marismortui).